Reading from the N-terminus, the 74-residue chain is Ubiquitin-like protein FUBI (74 aa).

Belongs to the ubiquitin family.

This Bos taurus (Bovine) protein is Ubiquitin-like protein FUBI (FAU).